A 323-amino-acid chain; its full sequence is Melanocortin receptor 3 (323 aa).

Over 1-37 (MNASCCLPSVQPTLPNGSEHLQAPFFSNQSSSAFCEQ) the chain is Extracellular. Asn2, Asn16, and Asn28 each carry an N-linked (GlcNAc...) asparagine glycan. The helical transmembrane segment at 38–63 (VFIKPEVFLSLGIVSLLENILVILAV) threads the bilayer. The Cytoplasmic segment spans residues 64-75 (VRNGNLHSPMYF). Residues 76–100 (FLCSLAVADMLVSVSNALETIMIAI) form a helical membrane-spanning segment. Topologically, residues 101 to 118 (VHSDYLTFEDQFIQHMDN) are extracellular. Residues 119 to 140 (IFDSMICISLVASICNLLAIAV) form a helical membrane-spanning segment. The Cytoplasmic segment spans residues 141–160 (DRYVTIFYALRYHSIMTVRK). The helical transmembrane segment at 161–181 (ALTLIVAIWVCCGVCGVVFIV) threads the bilayer. Over 182–186 (YSESK) the chain is Extracellular. A helical membrane pass occupies residues 187 to 210 (MVIVCLITMFFAMMLLMGTLYVHM). Over 211 to 245 (FLFARLHVKRIAALPPADGVAPQQHSCMKGAVTIT) the chain is Cytoplasmic. Residues 246 to 268 (ILLGVFIFCWAPFFLHLVLIITC) form a helical membrane-spanning segment. Residues 269-277 (PTNPYCICY) are Extracellular-facing. The chain crosses the membrane as a helical span at residues 278–301 (TAHFNTYLVLIMCNSVIDPLIYAF). The Cytoplasmic portion of the chain corresponds to 302–323 (RSLELRNTFREILCGCNGMNLG). A lipid anchor (S-palmitoyl cysteine) is attached at Cys315.

The protein belongs to the G-protein coupled receptor 1 family. In terms of tissue distribution, brain, placental, and gut tissues.

The protein localises to the cell membrane. Its function is as follows. Receptor for MSH (alpha, beta and gamma) and ACTH. This receptor is mediated by G proteins which activate adenylate cyclase. Required for expression of anticipatory patterns of activity and wakefulness during periods of limited nutrient availability and for the normal regulation of circadian clock activity in the brain. This Homo sapiens (Human) protein is Melanocortin receptor 3 (MC3R).